We begin with the raw amino-acid sequence, 162 residues long: 3-dehydroquinate dehydratase (162 aa).

Y22 (proton acceptor) is an active-site residue. Residues N73, H79, and D86 each contribute to the substrate site. H99 (proton donor) is an active-site residue. Residues 100–101 (LS) and R110 each bind substrate.

This sequence belongs to the type-II 3-dehydroquinase family. Homododecamer.

The enzyme catalyses 3-dehydroquinate = 3-dehydroshikimate + H2O. The protein operates within metabolic intermediate biosynthesis; chorismate biosynthesis; chorismate from D-erythrose 4-phosphate and phosphoenolpyruvate: step 3/7. Catalyzes a trans-dehydration via an enolate intermediate. This chain is 3-dehydroquinate dehydratase, found in Sulfurovum sp. (strain NBC37-1).